Consider the following 393-residue polypeptide: MAKLTLKDLELNNKRVLVRVDFNVPLEAGRVTDNTRIRAALPTIEYLLDHGARVILMSHLGRPKGKVKEELRLDPVARELESLLGRQVHKVNDCVGPEVEAAAAALKPGEVLLLENLRFHPEEEKNDPGFARQLASLADVYVNDAFGAAHRAHASTEGVAHYLPAAAGFLLQKEIETLGKALADPERPFVAIIGGAKVSDKISVIRNLLTKVDTLIIGGGMANTFLKAQGYAMGKSLVEEDQVPLAQELIQLAAQKGVKMLLPRDLVVAQEFKADAPHQVVAVNAVPDGWMALDIGPETARAYAGALEGARTVVWNGPMGVFEMEAFAHGTEAVARAVAAVDGMTIVGGGDSVAAVEKMGVAGKIGHISTGGGASLEFLEGKALPGVVALTEK.

Substrate is bound by residues 21–23, Arg36, 59–62, Arg118, and Arg151; these read DFN and HLGR. ATP is bound by residues Lys201, Glu323, and 349–352; that span reads GGDS.

Belongs to the phosphoglycerate kinase family. As to quaternary structure, monomer.

The protein localises to the cytoplasm. The enzyme catalyses (2R)-3-phosphoglycerate + ATP = (2R)-3-phospho-glyceroyl phosphate + ADP. Its pathway is carbohydrate degradation; glycolysis; pyruvate from D-glyceraldehyde 3-phosphate: step 2/5. The sequence is that of Phosphoglycerate kinase from Moorella thermoacetica (strain ATCC 39073 / JCM 9320).